We begin with the raw amino-acid sequence, 1509 residues long: Dynein axonemal assembly factor 1 homolog (1509 aa).

LRR repeat units lie at residues 34–56 (RLND…EEYT), 57–78 (ELKC…EKLS), 79–100 (KLKC…EPCR), 101–122 (ELDT…GTNI), 125–146 (VLNT…SDLV), and 150–171 (TLSV…KIFE). The region spanning 185–223 (PVVSRLPQYRKTLILACKELTYLDSRPVFPRDRACAEAW) is the LRRCT domain. Disordered regions lie at residues 252 to 280 (CTIR…DDTC), 306 to 327 (HPTS…ATSS), 962 to 1008 (SGDL…DSKN), and 1103 to 1122 (TLQT…KLRN). Residues 309–318 (SESGASTSSS) are compositionally biased toward low complexity. The segment covering 978-990 (SESEDYDTADDEY) has biased composition (acidic residues). Residues 1103–1112 (TLQTSFSTVG) are compositionally biased toward polar residues.

This sequence belongs to the DNAAF1 family.

Its subcellular location is the cell projection. The protein resides in the cilium. Functionally, cilium-specific protein required for cilia structures. The protein is Dynein axonemal assembly factor 1 homolog (dtr) of Drosophila yakuba (Fruit fly).